Consider the following 215-residue polypeptide: UPF0502 protein CKO_01995 (215 aa).

This sequence belongs to the UPF0502 family.

The polypeptide is UPF0502 protein CKO_01995 (Citrobacter koseri (strain ATCC BAA-895 / CDC 4225-83 / SGSC4696)).